A 525-amino-acid polypeptide reads, in one-letter code: uncharacterized protein (525 aa).

Polar residues-rich tracts occupy residues 139-149 and 336-349; these read LNSTPDKTQAG and SGKTDNAQETHTTS. Disordered regions lie at residues 139-158 and 330-356; these read LNSTPDKTQAGKTAKQHQAP and PAPAKNSGKTDNAQETHTTSPPGPYAT.

This is an uncharacterized protein from Treponema pallidum (strain Nichols).